Here is a 153-residue protein sequence, read N- to C-terminus: Transcriptional repressor NrdR (153 aa).

A zinc finger lies at 3–34 (CPSCFHNGTRVLDSRPVDEGRSIRRRRECESC). The ATP-cone domain occupies 49–139 (LIVVKKEGTR…VYRQFKDLNV (91 aa)).

Belongs to the NrdR family. Zn(2+) is required as a cofactor.

Negatively regulates transcription of bacterial ribonucleotide reductase nrd genes and operons by binding to NrdR-boxes. This is Transcriptional repressor NrdR from Bacillus mycoides (strain KBAB4) (Bacillus weihenstephanensis).